The primary structure comprises 144 residues: Bacilliredoxin BT9727_3899 (144 aa).

The protein belongs to the bacilliredoxin family.

This is Bacilliredoxin BT9727_3899 from Bacillus thuringiensis subsp. konkukian (strain 97-27).